The sequence spans 63 residues: Cecropin-1/3 (63 aa).

A signal peptide spans Met-1–Ala-23. Arg-62 bears the Arginine amide mark.

It belongs to the cecropin family.

It localises to the secreted. In terms of biological role, cecropins have lytic and antibacterial activity against several Gram-positive and Gram-negative bacteria. The chain is Cecropin-1/3 (Cec1) from Drosophila virilis (Fruit fly).